A 372-amino-acid polypeptide reads, in one-letter code: MSKRDYYEVLGVDRNASVEEVKKAYRKLARKYHPDVNKEEDAEAKFKEVKEAYDTLSDPQKKARYDQFGHADPNQGFGGAGASGDFGGFSDIFDMFFGGGGGRRNPNAPRQGDDLQYTMTLEFKEAVFGKETEIEIPREETCGTCHGSGAKPGTKPDTCSHCGGSGQLNVEQNTPFGRVVNRRVCNYCEGTGKIIKQKCATCSGKGKVRKRKKINIQVPAGIDNGQQLRVAGQGEAGANGGPPGDLYVVFQVKPHEFFERDGEDIYCEVPLTFPQVALGDEIEVPTLTGKVKLKIPAGTQTGTSFRLRGKGVPNVHGRGQGDQHVQVRVVTPKNLTENEKELMREFAGMSGGRPEEQNDGFFDKLRRAFKGD.

Residues 5 to 69 (DYYEVLGVDR…QKKARYDQFG (65 aa)) enclose the J domain. Residues 129–211 (GKETEIEIPR…CSGKGKVRKR (83 aa)) form a CR-type zinc finger. Zn(2+) is bound by residues cysteine 142, cysteine 145, cysteine 159, cysteine 162, cysteine 185, cysteine 188, cysteine 199, and cysteine 202. CXXCXGXG motif repeat units lie at residues 142-149 (CGTCHGSG), 159-166 (CSHCGGSG), 185-192 (CNYCEGTG), and 199-206 (CATCSGKG).

This sequence belongs to the DnaJ family. As to quaternary structure, homodimer. Zn(2+) is required as a cofactor.

The protein resides in the cytoplasm. Functionally, participates actively in the response to hyperosmotic and heat shock by preventing the aggregation of stress-denatured proteins and by disaggregating proteins, also in an autonomous, DnaK-independent fashion. Unfolded proteins bind initially to DnaJ; upon interaction with the DnaJ-bound protein, DnaK hydrolyzes its bound ATP, resulting in the formation of a stable complex. GrpE releases ADP from DnaK; ATP binding to DnaK triggers the release of the substrate protein, thus completing the reaction cycle. Several rounds of ATP-dependent interactions between DnaJ, DnaK and GrpE are required for fully efficient folding. Also involved, together with DnaK and GrpE, in the DNA replication of plasmids through activation of initiation proteins. This chain is Chaperone protein DnaJ, found in Shouchella clausii (strain KSM-K16) (Alkalihalobacillus clausii).